The primary structure comprises 494 residues: Glutamyl-tRNA(Gln) amidotransferase subunit A (494 aa).

Catalysis depends on charge relay system residues Lys-81 and Ser-156. Ser-180 (acyl-ester intermediate) is an active-site residue.

This sequence belongs to the amidase family. GatA subfamily. As to quaternary structure, heterotrimer of A, B and C subunits.

The enzyme catalyses L-glutamyl-tRNA(Gln) + L-glutamine + ATP + H2O = L-glutaminyl-tRNA(Gln) + L-glutamate + ADP + phosphate + H(+). Its function is as follows. Allows the formation of correctly charged Gln-tRNA(Gln) through the transamidation of misacylated Glu-tRNA(Gln) in organisms which lack glutaminyl-tRNA synthetase. The reaction takes place in the presence of glutamine and ATP through an activated gamma-phospho-Glu-tRNA(Gln). The chain is Glutamyl-tRNA(Gln) amidotransferase subunit A from Mycobacterium bovis (strain ATCC BAA-935 / AF2122/97).